Reading from the N-terminus, the 565-residue chain is Adenine deaminase 1 (565 aa).

This sequence belongs to the metallo-dependent hydrolases superfamily. Adenine deaminase family. It depends on Mn(2+) as a cofactor.

It carries out the reaction adenine + H2O + H(+) = hypoxanthine + NH4(+). This Rhizobium etli (strain ATCC 51251 / DSM 11541 / JCM 21823 / NBRC 15573 / CFN 42) protein is Adenine deaminase 1.